A 207-amino-acid chain; its full sequence is Large ribosomal subunit protein uL4 (207 aa).

Residues 58–78 (AGGGKKPWRQKGTGRARHGSI) are disordered. Basic residues predominate over residues 63-77 (KPWRQKGTGRARHGS).

Belongs to the universal ribosomal protein uL4 family. Part of the 50S ribosomal subunit.

One of the primary rRNA binding proteins, this protein initially binds near the 5'-end of the 23S rRNA. It is important during the early stages of 50S assembly. It makes multiple contacts with different domains of the 23S rRNA in the assembled 50S subunit and ribosome. Its function is as follows. Forms part of the polypeptide exit tunnel. The protein is Large ribosomal subunit protein uL4 of Aster yellows witches'-broom phytoplasma (strain AYWB).